A 360-amino-acid polypeptide reads, in one-letter code: Probable L-asparaginase 1 (360 aa).

The N-terminal stretch at 1-16 (MWRSIISFLFFSVALC) is a signal peptide. 3 N-linked (GlcNAc...) asparagine glycosylation sites follow: asparagine 27, asparagine 35, and asparagine 40. An Asparaginase/glutaminase domain is found at 39 to 359 (PNVTIFAMGG…QNITDIFSLE (321 aa)). Threonine 49 functions as the O-isoaspartyl threonine intermediate in the catalytic mechanism. Residue asparagine 82 is glycosylated (N-linked (GlcNAc...) asparagine). Substrate is bound at residue serine 96. N-linked (GlcNAc...) asparagine glycosylation is present at asparagine 106. Substrate is bound at residue 129–130 (TD). 5 N-linked (GlcNAc...) asparagine glycosylation sites follow: asparagine 144, asparagine 179, asparagine 246, asparagine 302, and asparagine 351.

This sequence belongs to the asparaginase 1 family.

The protein localises to the secreted. Its subcellular location is the cell wall. The catalysed reaction is L-asparagine + H2O = L-aspartate + NH4(+). The sequence is that of Probable L-asparaginase 1 from Schizosaccharomyces pombe (strain 972 / ATCC 24843) (Fission yeast).